The following is an 84-amino-acid chain: Large ribosomal subunit protein bL31B (84 aa).

Belongs to the bacterial ribosomal protein bL31 family. Type B subfamily. Part of the 50S ribosomal subunit.

Binds the 23S rRNA. This chain is Large ribosomal subunit protein bL31B, found in Rhodococcus jostii (strain RHA1).